An 802-amino-acid polypeptide reads, in one-letter code: Oligophrenin-1 (802 aa).

The PH domain occupies 265–368 (QPTIEGYLYT…WMEAMDGKEP (104 aa)). Residues 380–564 (MELNEVGFKF…ILIEHFGKIY (185 aa)) form the Rho-GAP domain. 2 disordered regions span residues 606–665 (SLDE…SEPC) and 681–802 (GTKA…GDES). The span at 617–627 (QTPNGTITSNL) shows a compositional bias: polar residues. A compositionally biased stretch (basic and acidic residues) spans 716–732 (HHKEGDTDGFSKVRPPG).

In terms of assembly, interacts with HOMER1. Interacts with AMPA receptor complexes. Interacts with SH3GL2 (endophilin-A1). Interacts (via C-terminus) with NR1D1.

It localises to the postsynapse. The protein localises to the presynapse. The protein resides in the cell projection. Its subcellular location is the axon. It is found in the dendritic spine. It localises to the dendrite. The protein localises to the cytoplasm. In terms of biological role, stimulates GTP hydrolysis of members of the Rho family. Its action on RHOA activity and signaling is implicated in growth and stabilization of dendritic spines, and therefore in synaptic function. Critical for the stabilization of AMPA receptors at postsynaptic sites. Critical for the regulation of synaptic vesicle endocytosis at presynaptic terminals. Required for the localization of NR1D1 to dendrites, can suppress its repressor activity and protect it from proteasomal degradation. The polypeptide is Oligophrenin-1 (Ophn1) (Mus musculus (Mouse)).